A 544-amino-acid chain; its full sequence is Chaperonin GroEL (544 aa).

ATP contacts are provided by residues 29 to 32 (TLGP), 86 to 90 (DGTTT), G413, 476 to 478 (NAA), and D492.

Belongs to the chaperonin (HSP60) family. As to quaternary structure, forms a cylinder of 14 subunits composed of two heptameric rings stacked back-to-back. Interacts with the co-chaperonin GroES.

The protein localises to the cytoplasm. It catalyses the reaction ATP + H2O + a folded polypeptide = ADP + phosphate + an unfolded polypeptide.. Functionally, together with its co-chaperonin GroES, plays an essential role in assisting protein folding. The GroEL-GroES system forms a nano-cage that allows encapsulation of the non-native substrate proteins and provides a physical environment optimized to promote and accelerate protein folding. The chain is Chaperonin GroEL from Bacillus cereus (strain B4264).